We begin with the raw amino-acid sequence, 452 residues long: Tubulin alpha-1 chain (452 aa).

GTP is bound at residue Gln11. Lys40 carries the N6-acetyllysine modification. Residues Glu71, Ser140, Gly144, Thr145, Thr179, Asn206, and Asn228 each contribute to the GTP site. A Mg(2+)-binding site is contributed by Glu71. The active site involves Glu254. Residues 433–452 form a disordered region; sequence EEVGVDSADAEGEEEEGDEY.

Belongs to the tubulin family. In terms of assembly, dimer of alpha and beta chains. A typical microtubule is a hollow water-filled tube with an outer diameter of 25 nm and an inner diameter of 15 nM. Alpha-beta heterodimers associate head-to-tail to form protofilaments running lengthwise along the microtubule wall with the beta-tubulin subunit facing the microtubule plus end conferring a structural polarity. Microtubules usually have 13 protofilaments but different protofilament numbers can be found in some organisms and specialized cells. The cofactor is Mg(2+). Undergoes a tyrosination/detyrosination cycle, the cyclic removal and re-addition of a C-terminal tyrosine residue by the enzymes tubulin tyrosine carboxypeptidase (TTCP) and tubulin tyrosine ligase (TTL), respectively. In terms of processing, acetylation of alpha chains at Lys-40 stabilizes microtubules and affects affinity and processivity of microtubule motors. This modification has a role in multiple cellular functions, ranging from cell motility, cell cycle progression or cell differentiation to intracellular trafficking and signaling.

Its subcellular location is the cytoplasm. The protein localises to the cytoskeleton. The enzyme catalyses GTP + H2O = GDP + phosphate + H(+). In terms of biological role, tubulin is the major constituent of microtubules, a cylinder consisting of laterally associated linear protofilaments composed of alpha- and beta-tubulin heterodimers. Microtubules grow by the addition of GTP-tubulin dimers to the microtubule end, where a stabilizing cap forms. Below the cap, tubulin dimers are in GDP-bound state, owing to GTPase activity of alpha-tubulin. This Paracentrotus lividus (Common sea urchin) protein is Tubulin alpha-1 chain.